Here is a 163-residue protein sequence, read N- to C-terminus: Nucleotide-binding protein MAV_4575 (163 aa).

This sequence belongs to the YajQ family.

Functionally, nucleotide-binding protein. The sequence is that of Nucleotide-binding protein MAV_4575 from Mycobacterium avium (strain 104).